Reading from the N-terminus, the 487-residue chain is E3 ubiquitin-protein ligase RNF8 (487 aa).

The FHA domain occupies Val-38–Leu-92. Residues Gln-68 to Gly-72 form a required for interaction with PIWIL1 region. Disordered stretches follow at residues Met-143 to Ile-176 and Glu-182 to Glu-201. Ser-157 is modified (phosphoserine). The RING-type zinc-finger motif lies at Cys-405–Arg-443.

The protein belongs to the RNF8 family. Homodimer. Forms a E2-E3 ubiquitin ligase complex composed of the RNF8 homodimer and a E2 heterodimer of UBE2N and UBE2V2. Interacts with class III E2s, including UBE2E1, UBE2E2, and UBE2E3 and with UBE2N. Interacts with RXRA. Interacts (via FHA domain) with phosphorylated HERC2 (via C-terminus). Interacts with PIWIL1; leading to sequester RNF8 in the cytoplasm. Interacts with WRAP53/TCAB1. In terms of processing, autoubiquitinated through 'Lys-48' and 'Lys-63' of ubiquitin. 'Lys-63' polyubiquitination is mediated by UBE2N. 'Lys-29'-type polyubiquitination is also observed, but it doesn't require its own functional RING-type zinc finger.

The protein resides in the nucleus. The protein localises to the cytoplasm. It localises to the midbody. Its subcellular location is the chromosome. It is found in the telomere. The catalysed reaction is S-ubiquitinyl-[E2 ubiquitin-conjugating enzyme]-L-cysteine + [acceptor protein]-L-lysine = [E2 ubiquitin-conjugating enzyme]-L-cysteine + N(6)-ubiquitinyl-[acceptor protein]-L-lysine.. The protein operates within protein modification; protein ubiquitination. Functionally, E3 ubiquitin-protein ligase that plays a key role in DNA damage signaling via 2 distinct roles: by mediating the 'Lys-63'-linked ubiquitination of histones H2A and H2AX and promoting the recruitment of DNA repair proteins at double-strand breaks (DSBs) sites, and by catalyzing 'Lys-48'-linked ubiquitination to remove target proteins from DNA damage sites. Following DNA DSBs, it is recruited to the sites of damage by ATM-phosphorylated MDC1 and catalyzes the 'Lys-63'-linked ubiquitination of histones H2A and H2AX, thereby promoting the formation of TP53BP1 and BRCA1 ionizing radiation-induced foci (IRIF). Also controls the recruitment of UIMC1-BRCC3 (RAP80-BRCC36) and PAXIP1/PTIP to DNA damage sites. Promotes the recruitment of NBN to DNA damage sites by catalyzing 'Lys-6'-linked ubiquitination of NBN. Also recruited at DNA interstrand cross-links (ICLs) sites and catalyzes 'Lys-63'-linked ubiquitination of histones H2A and H2AX, leading to recruitment of FAAP20 and Fanconi anemia (FA) complex, followed by interstrand cross-link repair. H2A ubiquitination also mediates the ATM-dependent transcriptional silencing at regions flanking DSBs in cis, a mechanism to avoid collision between transcription and repair intermediates. Promotes the formation of 'Lys-63'-linked polyubiquitin chains via interactions with the specific ubiquitin-conjugating UBE2N/UBC13 and ubiquitinates non-histone substrates such as PCNA. Substrates that are polyubiquitinated at 'Lys-63' are usually not targeted for degradation. Also catalyzes the formation of 'Lys-48'-linked polyubiquitin chains via interaction with the ubiquitin-conjugating UBE2L6/UBCH8, leading to degradation of substrate proteins such as CHEK2, JMJD2A/KDM4A and KU80/XRCC5: it is still unclear how the preference toward 'Lys-48'- versus 'Lys-63'-linked ubiquitination is regulated but it could be due to RNF8 ability to interact with specific E2 specific ligases. For instance, interaction with phosphorylated HERC2 promotes the association between RNF8 and UBE2N/UBC13 and favors the specific formation of 'Lys-63'-linked ubiquitin chains. Promotes non-homologous end joining (NHEJ) by promoting the 'Lys-48'-linked ubiquitination and degradation the of KU80/XRCC5. Following DNA damage, mediates the ubiquitination and degradation of JMJD2A/KDM4A in collaboration with RNF168, leading to unmask H4K20me2 mark and promote the recruitment of TP53BP1 at DNA damage sites. Following DNA damage, mediates the ubiquitination and degradation of POLD4/p12, a subunit of DNA polymerase delta. In the absence of POLD4, DNA polymerase delta complex exhibits higher proofreading activity. In addition to its function in damage signaling, also plays a role in higher-order chromatin structure by mediating extensive chromatin decondensation. Involved in the activation of ATM by promoting histone H2B ubiquitination, which indirectly triggers histone H4 'Lys-16' acetylation (H4K16ac), establishing a chromatin environment that promotes efficient activation of ATM kinase. Required in the testis, where it plays a role in the replacement of histones during spermatogenesis. At uncapped telomeres, promotes the joining of deprotected chromosome ends by inducing H2A ubiquitination and TP53BP1 recruitment, suggesting that it may enhance cancer development by aggravating telomere-induced genome instability in case of telomeric crisis. Promotes the assembly of RAD51 at DNA DSBs in the absence of BRCA1 and TP53BP1 Also involved in class switch recombination in immune system, via its role in regulation of DSBs repair. May be required for proper exit from mitosis after spindle checkpoint activation and may regulate cytokinesis. May play a role in the regulation of RXRA-mediated transcriptional activity. Not involved in RXRA ubiquitination by UBE2E2. This Bos taurus (Bovine) protein is E3 ubiquitin-protein ligase RNF8.